Consider the following 127-residue polypeptide: Major sperm protein 33 (127 aa).

N-acetylalanine is present on Ala2. Residues 9-126 (DIQTQPGTKI…RRKNLPIEYN (118 aa)) enclose the MSP domain.

In terms of tissue distribution, sperm.

It localises to the cell projection. Its subcellular location is the pseudopodium. It is found in the cytoplasm. The protein localises to the cytoskeleton. In terms of biological role, central component in molecular interactions underlying sperm crawling. Forms an extensive filament system that extends from sperm villipoda, along the leading edge of the pseudopod. This Caenorhabditis elegans protein is Major sperm protein 33 (msp-33).